The following is a 466-amino-acid chain: UDP-N-acetylmuramoylalanine--D-glutamate ligase (466 aa).

121–127 (GTNGKST) contacts ATP.

It belongs to the MurCDEF family.

The protein localises to the cytoplasm. The catalysed reaction is UDP-N-acetyl-alpha-D-muramoyl-L-alanine + D-glutamate + ATP = UDP-N-acetyl-alpha-D-muramoyl-L-alanyl-D-glutamate + ADP + phosphate + H(+). Its pathway is cell wall biogenesis; peptidoglycan biosynthesis. Cell wall formation. Catalyzes the addition of glutamate to the nucleotide precursor UDP-N-acetylmuramoyl-L-alanine (UMA). In Nitrobacter hamburgensis (strain DSM 10229 / NCIMB 13809 / X14), this protein is UDP-N-acetylmuramoylalanine--D-glutamate ligase.